We begin with the raw amino-acid sequence, 542 residues long: Putative cysteine ligase BshC (542 aa).

Residues 458–487 (VAKNAAIIQAQIEFLQQTLERALLSKHEVE) are a coiled coil.

Belongs to the BshC family.

In terms of biological role, involved in bacillithiol (BSH) biosynthesis. May catalyze the last step of the pathway, the addition of cysteine to glucosamine malate (GlcN-Mal) to generate BSH. This Geobacillus thermodenitrificans (strain NG80-2) protein is Putative cysteine ligase BshC.